The primary structure comprises 137 residues: Venom allergen 4 (137 aa).

Residues 1–19 (MKTFVLVSCLLVFTQIIYA) form the signal peptide.

The protein belongs to the ant venom allergen 2/4 family. Monomer. As to expression, expressed by the venom gland.

It is found in the secreted. This chain is Venom allergen 4, found in Solenopsis geminata (Tropical fire ant).